Reading from the N-terminus, the 499-residue chain is Cytochrome P450 81Q32 (499 aa).

Residues 5–25 (TLLYTFLAVVLLSISLKLFPV) form a helical membrane-spanning segment. N-linked (GlcNAc...) asparagine glycosylation is found at asparagine 112, asparagine 183, and asparagine 266. Position 434 (cysteine 434) interacts with heme.

The protein belongs to the cytochrome P450 family. Expressed in leaf epidermis and in the leaf internal phloem-associated parenchyma (IPAP) inside the mesophyll.

Its subcellular location is the membrane. In Catharanthus roseus (Madagascar periwinkle), this protein is Cytochrome P450 81Q32.